The following is a 498-amino-acid chain: Zinc finger protein 497 (498 aa).

Residues 30-104 (SEGAVSGGWG…LRPSPLPEEP (75 aa)) form a disordered region. 14 consecutive C2H2-type zinc fingers follow at residues 106–128 (CRCG…RRVH), 134–156 (YTCP…QRIH), 162–184 (YACR…QETH), 190–212 (FRCP…RRTH), 218–240 (YECP…RRVH), 246–268 (HACR…LKIH), 274–296 (HACP…RRTH), 302–324 (FPCA…QRTH), 330–352 (FECA…RRVH), 358–380 (HACA…RRTH), 386–408 (FACA…RLSH), 414–436 (FACA…QRLH), 442–464 (FVCA…RRTH), and 470–492 (YACG…QKRH).

The protein belongs to the krueppel C2H2-type zinc-finger protein family.

Its subcellular location is the nucleus. Its function is as follows. May be involved in transcriptional regulation. In Homo sapiens (Human), this protein is Zinc finger protein 497 (ZNF497).